The chain runs to 203 residues: MVLGLFSIIFSFSRKCHYASRMLLVSFLLDMAVRAMTSHINICSKLGAELNDFAVFTTFGLASALLLGVDGLLSGILAIIYVSAASFHLCFYSPGVPSTYKGLPCPYASCILASTSLLTKGNRFILCCMASLMILFMMDQSYYPYDKILESENWKKLVYIGGVIMLFFSPLSLSAFYCLMWSLSYIFFPDALWGKAACLSPQH.

Transmembrane regions (helical) follow at residues Gly-60–Ile-80, Phe-124–Pro-144, and Leu-157–Tyr-177.

It is found in the membrane. The chain is Transmembrane protein 269 from Homo sapiens (Human).